The sequence spans 189 residues: MKLFIVLVAGMPGAGKSIVSKAARDLGLPVYNMGDVIRMETSRLYGIITPETMRETSRRVRKLYGEDYVARKTIEQIKEKRGVIVVDGVRSLVEVEVFKKYAETVILAVHASPKTRFERIRKRNRPGDPDNWEDFVKRDLTELQFGLGNVIALADYMIVNEGSIEEAYRGAYNILKKLVEKNAKDNSDS.

10–17 (GMPGAGKS) lines the ATP pocket.

Belongs to the UPF0200 family.

This is UPF0200 protein Smar_1234 from Staphylothermus marinus (strain ATCC 43588 / DSM 3639 / JCM 9404 / F1).